A 332-amino-acid chain; its full sequence is 2,3-diketo-L-gulonate reductase (332 aa).

H44 (proton donor) is an active-site residue. NAD(+) contacts are provided by residues 168-174 (ITMVDMS), 224-225 (WK), and 304-306 (GHE).

The protein belongs to the LDH2/MDH2 oxidoreductase family. DlgD subfamily. In terms of assembly, homodimer.

The protein localises to the cytoplasm. It carries out the reaction 3-dehydro-L-gulonate + NAD(+) = 2,3-dioxo-L-gulonate + NADH + H(+). The enzyme catalyses 3-dehydro-L-gulonate + NADP(+) = 2,3-dioxo-L-gulonate + NADPH + H(+). Catalyzes the reduction of 2,3-diketo-L-gulonate in the presence of NADH, to form 3-keto-L-gulonate. This chain is 2,3-diketo-L-gulonate reductase, found in Salmonella newport (strain SL254).